A 388-amino-acid chain; its full sequence is Processive diacylglycerol beta-glucosyltransferase (388 aa).

This sequence belongs to the glycosyltransferase 28 family. UgtP subfamily.

It is found in the cell membrane. The catalysed reaction is a 1,2-diacyl-3-O-(beta-D-glucopyranosyl)-sn-glycerol + UDP-alpha-D-glucose = a 1,2-diacyl-3-O-(beta-D-Glc-(1-&gt;6)-beta-D-Glc)-sn-glycerol + UDP + H(+). The enzyme catalyses a 1,2-diacyl-3-O-(beta-D-Glc-(1-&gt;6)-beta-D-Glc)-sn-glycerol + UDP-alpha-D-glucose = a 1,2-diacyl-3-O-(beta-D-Glc-(1-&gt;6)-beta-D-Glc-(1-&gt;6)-beta-D-Glc)-sn-glycerol + UDP + H(+). It carries out the reaction a 1,2-diacyl-sn-glycerol + UDP-alpha-D-glucose = a 1,2-diacyl-3-O-(beta-D-glucopyranosyl)-sn-glycerol + UDP + H(+). The protein operates within glycolipid metabolism; diglucosyl-diacylglycerol biosynthesis. Functionally, processive glucosyltransferase involved in the biosynthesis of both the bilayer- and non-bilayer-forming membrane glucolipids. Is able to successively transfer up to three glucosyl residues to diacylglycerol (DAG), thereby catalyzing the formation of beta-monoglucosyl-DAG (3-O-(beta-D-glucopyranosyl)-1,2-diacyl-sn-glycerol), beta-diglucosyl-DAG (3-O-(beta-D-glucopyranosyl-beta-(1-&gt;6)-D-glucopyranosyl)-1,2-diacyl-sn-glycerol) and beta-triglucosyl-DAG (3-O-(beta-D-glucopyranosyl-beta-(1-&gt;6)-D-glucopyranosyl-beta-(1-&gt;6)-D-glucopyranosyl)-1,2-diacyl-sn-glycerol). Beta-diglucosyl-DAG is the predominant glycolipid found in Bacillales and is also used as a membrane anchor for lipoteichoic acid (LTA). The chain is Processive diacylglycerol beta-glucosyltransferase from Bacillus cereus (strain ATCC 14579 / DSM 31 / CCUG 7414 / JCM 2152 / NBRC 15305 / NCIMB 9373 / NCTC 2599 / NRRL B-3711).